A 278-amino-acid chain; its full sequence is Potassium/proton antiporter CemA (278 aa).

Transmembrane regions (helical) follow at residues 60 to 80 (YLVL…SLVF), 163 to 183 (ILAF…IAVL), 201 to 221 (FLII…GWEV), and 239 to 259 (IFLF…YWIF).

It belongs to the CemA family.

The protein resides in the plastid. Its subcellular location is the chloroplast inner membrane. The enzyme catalyses K(+)(in) + H(+)(out) = K(+)(out) + H(+)(in). In terms of biological role, contributes to K(+)/H(+) antiport activity by supporting proton efflux to control proton extrusion and homeostasis in chloroplasts in a light-dependent manner to modulate photosynthesis. Prevents excessive induction of non-photochemical quenching (NPQ) under continuous-light conditions. Indirectly promotes efficient inorganic carbon uptake into chloroplasts. In Guillardia theta (Cryptophyte), this protein is Potassium/proton antiporter CemA.